A 159-amino-acid polypeptide reads, in one-letter code: MAIQFVINLLVSVIWLLVTNSYTLNNFVLGFILGLFLVYLLHRVLPGQFYLVRIYRIIMLIITFLTELIKANFGVLKIILKPRIENKPGFFVYETELERDWQLVLLSNLITLTPGTVVLGISDDRKKIYIHSIDFSTKEEEIQNIKSSLEKVVRKVGEK.

The next 4 membrane-spanning stretches (helical) occupy residues 1–21 (MAIQ…VTNS), 27–47 (FVLG…VLPG), 60–80 (LIIT…KIIL), and 101–121 (WQLV…VLGI).

This sequence belongs to the CPA3 antiporters (TC 2.A.63) subunit E family. May form a heterooligomeric complex that consists of seven subunits: mnhA1, mnhB1, mnhC1, mnhD1, mnhE1, mnhF1 and mnhG1.

Its subcellular location is the cell membrane. In terms of biological role, mnh complex is a Na(+)/H(+) antiporter involved in Na(+) excretion. The polypeptide is Na(+)/H(+) antiporter subunit E1 (mnhE1) (Staphylococcus epidermidis (strain ATCC 35984 / DSM 28319 / BCRC 17069 / CCUG 31568 / BM 3577 / RP62A)).